The sequence spans 297 residues: Light-independent protochlorophyllide reductase iron-sulfur ATP-binding protein (297 aa).

Residues 41-46 (GIGKST) and lysine 70 contribute to the ATP site. Serine 45 contacts Mg(2+). Cysteine 126 and cysteine 160 together coordinate [4Fe-4S] cluster. ATP contacts are provided by residues 211–212 (NR) and 235–237 (PDL).

It belongs to the NifH/BchL/ChlL family. In terms of assembly, homodimer. Protochlorophyllide reductase is composed of three subunits; BchL, BchN and BchB. It depends on [4Fe-4S] cluster as a cofactor.

It catalyses the reaction chlorophyllide a + oxidized 2[4Fe-4S]-[ferredoxin] + 2 ADP + 2 phosphate = protochlorophyllide a + reduced 2[4Fe-4S]-[ferredoxin] + 2 ATP + 2 H2O. The protein operates within porphyrin-containing compound metabolism; bacteriochlorophyll biosynthesis (light-independent). Functionally, component of the dark-operative protochlorophyllide reductase (DPOR) that uses Mg-ATP and reduced ferredoxin to reduce ring D of protochlorophyllide (Pchlide) to form chlorophyllide a (Chlide). This reaction is light-independent. The L component serves as a unique electron donor to the NB-component of the complex, and binds Mg-ATP. This chain is Light-independent protochlorophyllide reductase iron-sulfur ATP-binding protein, found in Cereibacter sphaeroides (strain ATCC 17025 / ATH 2.4.3) (Rhodobacter sphaeroides).